The primary structure comprises 268 residues: Universal stress protein MT3220 (268 aa).

Residues Gly13, 107–113 (GSVGLDH), Arg117, and 120–121 (SV) contribute to the ATP site.

Belongs to the universal stress protein A family.

This Mycobacterium tuberculosis (strain CDC 1551 / Oshkosh) protein is Universal stress protein MT3220.